The following is a 149-amino-acid chain: MATRFRQTRRRRGHVSMGYGRIGKHRKQRGGRGNAGGQHHRKTWFTTFHPDYFGKHGMRVFHLKANKYYCPSINVDSLWSLVGKDVQAQYKNAKVGEEVPVIDCVKHGYFKVLGKGFLPKQPVIVRARYFSEKAQQKIKAVGGACELTA.

The tract at residues 21 to 40 (RIGKHRKQRGGRGNAGGQHH) is disordered.

The protein belongs to the universal ribosomal protein uL15 family. Component of the large ribosomal subunit.

It localises to the cytoplasm. The protein resides in the cytosol. The protein localises to the endoplasmic reticulum. Component of the large ribosomal subunit. The ribosome is a large ribonucleoprotein complex responsible for the synthesis of proteins in the cell. This Entamoeba histolytica (strain ATCC 30459 / HM-1:IMSS / ABRM) protein is Large ribosomal subunit protein uL15A (rpl27a-1).